The chain runs to 402 residues: NADH-quinone oxidoreductase subunit D 2 (402 aa).

This sequence belongs to the complex I 49 kDa subunit family. NDH-1 is composed of 14 different subunits. Subunits NuoB, C, D, E, F, and G constitute the peripheral sector of the complex.

The protein localises to the cell inner membrane. The enzyme catalyses a quinone + NADH + 5 H(+)(in) = a quinol + NAD(+) + 4 H(+)(out). Functionally, NDH-1 shuttles electrons from NADH, via FMN and iron-sulfur (Fe-S) centers, to quinones in the respiratory chain. The immediate electron acceptor for the enzyme in this species is believed to be ubiquinone. Couples the redox reaction to proton translocation (for every two electrons transferred, four hydrogen ions are translocated across the cytoplasmic membrane), and thus conserves the redox energy in a proton gradient. The sequence is that of NADH-quinone oxidoreductase subunit D 2 from Nitrobacter hamburgensis (strain DSM 10229 / NCIMB 13809 / X14).